Here is a 346-residue protein sequence, read N- to C-terminus: Queuosine 5'-phosphate N-glycosylase/hydrolase (346 aa).

Residues histidine 49, phenylalanine 243, aspartate 245, aspartate 310, and aspartate 315 each contribute to the queuine site. Aspartate 245 (nucleophile or transition state stabilizer) is an active-site residue.

It belongs to the QNG1 protein family.

The enzyme catalyses queuosine 5'-phosphate + H2O = queuine + D-ribose 5-phosphate. Its function is as follows. Catalyzes the hydrolysis of queuosine 5'-phosphate, releasing the nucleobase queuine (q). Is required for salvage of queuine from exogenous queuosine (Q) that is imported and then converted to queuosine 5'-phosphate intracellularly. This chain is Queuosine 5'-phosphate N-glycosylase/hydrolase, found in Schizosaccharomyces pombe (strain 972 / ATCC 24843) (Fission yeast).